A 385-amino-acid chain; its full sequence is Mannitol-1-phosphate 5-dehydrogenase (385 aa).

3–14 (DVHFGAGNIGRG) serves as a coordination point for NAD(+).

It belongs to the mannitol dehydrogenase family.

It catalyses the reaction D-mannitol 1-phosphate + NAD(+) = beta-D-fructose 6-phosphate + NADH + H(+). The sequence is that of Mannitol-1-phosphate 5-dehydrogenase from Lactiplantibacillus plantarum (strain ATCC BAA-793 / NCIMB 8826 / WCFS1) (Lactobacillus plantarum).